A 255-amino-acid chain; its full sequence is 1-(5-phosphoribosyl)-5-[(5-phosphoribosylamino)methylideneamino] imidazole-4-carboxamide isomerase (255 aa).

The Proton acceptor role is filled by Asp-8. The active-site Proton donor is the Asp-129.

Belongs to the HisA/HisF family.

Its subcellular location is the cytoplasm. The enzyme catalyses 1-(5-phospho-beta-D-ribosyl)-5-[(5-phospho-beta-D-ribosylamino)methylideneamino]imidazole-4-carboxamide = 5-[(5-phospho-1-deoxy-D-ribulos-1-ylimino)methylamino]-1-(5-phospho-beta-D-ribosyl)imidazole-4-carboxamide. It participates in amino-acid biosynthesis; L-histidine biosynthesis; L-histidine from 5-phospho-alpha-D-ribose 1-diphosphate: step 4/9. The protein is 1-(5-phosphoribosyl)-5-[(5-phosphoribosylamino)methylideneamino] imidazole-4-carboxamide isomerase of Gloeobacter violaceus (strain ATCC 29082 / PCC 7421).